A 512-amino-acid chain; its full sequence is MPEKYVAAIDQGTTSTRCILFRHDGSIATVAQFEHKQIFPKKGWVEHDANEIWNNTRRAVGEAMAELDISVNDVVSVGITNQRETTVVWDKNTGEPIYNAIVWQDTRTNDIAQRLAGDEGPDRWRKTTGVRLNSYPAGPKIMWILENVEGAREKAEKGDLLFGTIDTWLLWNLTGGVDGDNGNPALHVTDVTNASRTSLMDLKTLKWDEDLCKAMDIPQSMLPEIRPSIGDFRTVRARGSLAGVPIRGVLGDQQAAMFGQCCFGNGDAKNTYGTGLFMLLNTGAKPKWSDNGLITTVCYQIENQKPVYALEGSVAMGGSLVQWLRDNLQLIPNAPSVENMAKSVEDNGGVYFVPAFSGLFAPRWRPDARGAIVGLTRFANRNHLARAVLEATAYQTREVLDAMVTDSGVDINALKVDGGMVMNEFLMQFQSDIINTEVVRPKNIETTALGAAYAAGLSAGFWDSLNELKEQSTVDKVWKPKMGEDERKQLYSDWNRAVERTYNWEESTNEPS.

Threonine 13 provides a ligand contact to ADP. Positions 13, 14, and 15 each coordinate ATP. Position 13 (threonine 13) interacts with sn-glycerol 3-phosphate. Arginine 17 provides a ligand contact to ADP. 4 residues coordinate sn-glycerol 3-phosphate: arginine 83, glutamate 84, tyrosine 135, and aspartate 252. Glycerol is bound by residues arginine 83, glutamate 84, tyrosine 135, aspartate 252, and glutamine 253. 2 residues coordinate ADP: threonine 274 and glycine 318. ATP contacts are provided by threonine 274, glycine 318, glutamine 322, and glycine 419. Residues glycine 419 and asparagine 423 each contribute to the ADP site.

This sequence belongs to the FGGY kinase family.

The enzyme catalyses glycerol + ATP = sn-glycerol 3-phosphate + ADP + H(+). Its pathway is polyol metabolism; glycerol degradation via glycerol kinase pathway; sn-glycerol 3-phosphate from glycerol: step 1/1. Inhibited by fructose 1,6-bisphosphate (FBP). Functionally, key enzyme in the regulation of glycerol uptake and metabolism. Catalyzes the phosphorylation of glycerol to yield sn-glycerol 3-phosphate. This is Glycerol kinase from Corynebacterium kroppenstedtii (strain DSM 44385 / JCM 11950 / CIP 105744 / CCUG 35717).